A 339-amino-acid polypeptide reads, in one-letter code: MTVRVAINGFGRIGRNVVRALYESGRRAEITVVAINELADAAGMAHLLKYDTSHGRFAWEVRQERDQLFVGDDAIRVLHERSLQSLPWRELGVDVVLDCTGVYGSREHGEAHIAAGAKKVLFSHPGSNDLDTTVVYGVNQDQLRAEHRIVSNASCTTNCIIPVIKLLDDAYGIESGTVTTIHSAMHDQQVIDAYHPDLRRTRAASQSIIPVDTKLAAGITRFFPQFNDRFEAIAVRVPTINVTAIDLSVTVKKPVKANEVNLLLQKAAQGAFHGIVDYTELPLVSVDFNHDPHSAIVDGTQTRVSGAHLIKTLVWCDNEWGFANRMLDTTLAMATVAFR.

NAD(+) is bound by residues 12–13 (RI) and Arg81. Substrate-binding positions include 154-156 (SCT), Arg200, 213-214 (TK), and Arg236. The active-site Nucleophile is the Cys155. Asn318 is a binding site for NAD(+).

The protein belongs to the glyceraldehyde-3-phosphate dehydrogenase family. Epd subfamily. As to quaternary structure, homotetramer.

It is found in the cytoplasm. It catalyses the reaction D-erythrose 4-phosphate + NAD(+) + H2O = 4-phospho-D-erythronate + NADH + 2 H(+). It participates in cofactor biosynthesis; pyridoxine 5'-phosphate biosynthesis; pyridoxine 5'-phosphate from D-erythrose 4-phosphate: step 1/5. In terms of biological role, catalyzes the NAD-dependent conversion of D-erythrose 4-phosphate to 4-phosphoerythronate. This is D-erythrose-4-phosphate dehydrogenase from Escherichia coli (strain UTI89 / UPEC).